The following is a 237-amino-acid chain: N-(5'-phosphoribosyl)anthranilate isomerase (237 aa).

It belongs to the TrpF family.

The enzyme catalyses N-(5-phospho-beta-D-ribosyl)anthranilate = 1-(2-carboxyphenylamino)-1-deoxy-D-ribulose 5-phosphate. It functions in the pathway amino-acid biosynthesis; L-tryptophan biosynthesis; L-tryptophan from chorismate: step 3/5. The chain is N-(5'-phosphoribosyl)anthranilate isomerase (TRP1) from Komagataella pastoris (Yeast).